The chain runs to 61 residues: Conotoxin Cal14.6 (61 aa).

The signal sequence occupies residues 1 to 21 (MKFLLFLSVALLLTSFIETEA). The propeptide occupies 22–38 (GPVNEAGVERLFRALVG). Pro-57 carries the post-translational modification 4-hydroxyproline; partial. Residue Pro-60 is modified to Proline amide.

In terms of processing, contains 2 disulfide bonds. In terms of tissue distribution, expressed by the venom duct.

It is found in the secreted. Its function is as follows. Probable neurotoxin with unknown target. Possibly targets ion channels. This Californiconus californicus (California cone) protein is Conotoxin Cal14.6.